We begin with the raw amino-acid sequence, 48 residues long: Light-harvesting protein B-870 beta chain (48 aa).

Residues 2–21 lie on the Cytoplasmic side of the membrane; that stretch reads AERKGSISGLTDDEAQEFHK. His-20 and His-38 together coordinate a bacteriochlorophyll. A helical transmembrane segment spans residues 22–44; the sequence is FWVQGFVGFTAVAVVAHFLVWVW. At 45 to 48 the chain is on the periplasmic side; the sequence is RPWL.

As to quaternary structure, an alpha/beta heterodimer. The core complex is formed by different alpha and beta chains, binding bacteriochlorophyll molecules, and arranged most probably in tetrameric structures disposed around the reaction center. The non-pigmented gamma chains may constitute additional components.

It localises to the cell inner membrane. Functionally, antenna complexes are light-harvesting systems, which transfer the excitation energy to the reaction centers. The sequence is that of Light-harvesting protein B-870 beta chain (pufB) from Rubrivivax gelatinosus (Rhodocyclus gelatinosus).